A 314-amino-acid polypeptide reads, in one-letter code: Polyamine aminopropyltransferase (314 aa).

The PABS domain maps to 13–249 (WSWFLEWLTP…SMWGFVVASD (237 aa)). Glutamine 42 provides a ligand contact to S-methyl-5'-thioadenosine. Positions 73 and 97 each coordinate spermidine. S-methyl-5'-thioadenosine contacts are provided by residues aspartate 117 and 149-150 (DA). Aspartate 168 acts as the Proton acceptor in catalysis. Proline 177 is an S-methyl-5'-thioadenosine binding site.

It belongs to the spermidine/spermine synthase family. In terms of assembly, homodimer or homotetramer.

It localises to the cytoplasm. It catalyses the reaction S-adenosyl 3-(methylsulfanyl)propylamine + putrescine = S-methyl-5'-thioadenosine + spermidine + H(+). Its pathway is amine and polyamine biosynthesis; spermidine biosynthesis; spermidine from putrescine: step 1/1. Functionally, catalyzes the irreversible transfer of a propylamine group from the amino donor S-adenosylmethioninamine (decarboxy-AdoMet) to putrescine (1,4-diaminobutane) to yield spermidine. The polypeptide is Polyamine aminopropyltransferase (Aeropyrum pernix (strain ATCC 700893 / DSM 11879 / JCM 9820 / NBRC 100138 / K1)).